We begin with the raw amino-acid sequence, 215 residues long: Sec-independent protein translocase protein TatB (215 aa).

A helical transmembrane segment spans residues 1-21; sequence MLDIGWTELVVIAIVLIIVVG. Disordered regions lie at residues 95 to 119 and 138 to 215; these read DLQK…EPVN and AVSS…KGDA. A compositionally biased stretch (basic and acidic residues) spans 145 to 157; that stretch reads QMDRAADVPKASE. The segment covering 203–215 has biased composition (basic residues); it reads SKTRAASRKKGDA.

The protein belongs to the TatB family. In terms of assembly, the Tat system comprises two distinct complexes: a TatABC complex, containing multiple copies of TatA, TatB and TatC subunits, and a separate TatA complex, containing only TatA subunits. Substrates initially bind to the TatABC complex, which probably triggers association of the separate TatA complex to form the active translocon.

Its subcellular location is the cell inner membrane. Its function is as follows. Part of the twin-arginine translocation (Tat) system that transports large folded proteins containing a characteristic twin-arginine motif in their signal peptide across membranes. Together with TatC, TatB is part of a receptor directly interacting with Tat signal peptides. TatB may form an oligomeric binding site that transiently accommodates folded Tat precursor proteins before their translocation. The protein is Sec-independent protein translocase protein TatB of Rhizobium meliloti (strain 1021) (Ensifer meliloti).